The primary structure comprises 264 residues: Thymidylate synthase (264 aa).

Arg-21 contacts dUMP. Position 51 (His-51) interacts with (6R)-5,10-methylene-5,6,7,8-tetrahydrofolate. Residue 126–127 (RR) participates in dUMP binding. Catalysis depends on Cys-146, which acts as the Nucleophile. Residues 166-169 (RSAD), Asn-177, and 207-209 (HIY) contribute to the dUMP site. Asp-169 contributes to the (6R)-5,10-methylene-5,6,7,8-tetrahydrofolate binding site. Ser-263 contacts (6R)-5,10-methylene-5,6,7,8-tetrahydrofolate.

This sequence belongs to the thymidylate synthase family. Bacterial-type ThyA subfamily. Homodimer.

It localises to the cytoplasm. It carries out the reaction dUMP + (6R)-5,10-methylene-5,6,7,8-tetrahydrofolate = 7,8-dihydrofolate + dTMP. The protein operates within pyrimidine metabolism; dTTP biosynthesis. Functionally, catalyzes the reductive methylation of 2'-deoxyuridine-5'-monophosphate (dUMP) to 2'-deoxythymidine-5'-monophosphate (dTMP) while utilizing 5,10-methylenetetrahydrofolate (mTHF) as the methyl donor and reductant in the reaction, yielding dihydrofolate (DHF) as a by-product. This enzymatic reaction provides an intracellular de novo source of dTMP, an essential precursor for DNA biosynthesis. The chain is Thymidylate synthase from Bacillus pumilus (strain SAFR-032).